The primary structure comprises 401 residues: Protein nanos (401 aa).

The segment at 181–207 is disordered; sequence LGRMSYGSAPPQVQMPPQQQHQQQQGL. Residues 190-205 show a composition bias toward low complexity; it reads PPQVQMPPQQQHQQQQ. The Nanos-type zinc-finger motif lies at 318–372; that stretch reads HCVFCENNNEPEAVINSHSVRDNFNRVLCPKLRTYVCPICGASGDSAHTIKYCPK. Residues C319, C322, H335, C346, C354, C357, H365, and C370 each coordinate Zn(2+). 2 short sequence motifs (C2HC) span residues 319 to 346 and 354 to 370; these read CVFC…RVLC and CPIC…IKYC.

The protein belongs to the nanos family. Interacts with pum and brat. Interacts with cup. Interacts with mei-P26; possibly involved in regulation of brat levels. Interacts with wh; may be involved in mei-P26-dependent derepression of the BMP signaling pathway. Acts via the formation of a quaternary complex composed of pum, nanos, brat and the 3'-UTR mRNA of hb. Binds RNA with no specificity. In terms of tissue distribution, posterior part of the embryo. While the transcript is present throughout the embryo, nanos translation is controlled by smg, and the protein is found in pole plasm and pole cells. In the female ovary expressed in germline stem cells, precystoblasts and in maturing cystoblasts; in early cystoblasts expression is post-transcriptionally repressed by bam in a 3'UTR-dependent manner.

The protein resides in the cytoplasm. Its subcellular location is the cytoplasmic ribonucleoprotein granule. Its function is as follows. Maternal RNA-binding protein that is required for germ cells proliferation and self-renewal. Acts by forming a complex with pum and brat that regulates translation and mRNA stability. The complex binds to the Nanos Response Element (NRE), a 16 bp sequence in the hb mRNA 3'-UTR and prevents its translation. Controls posterior development. Rescuing factor for the abdominal defect of posterior group mutants. The other posterior group genes are not required for nanos function but rather play a role in localization or distribution of nanos protein. This Drosophila melanogaster (Fruit fly) protein is Protein nanos.